Consider the following 475-residue polypeptide: Ribulose bisphosphate carboxylase large chain (475 aa).

Positions 1-2 are excised as a propeptide; sequence MS. At Pro3 the chain carries N-acetylproline. Residue Lys14 is modified to N6,N6,N6-trimethyllysine. Residues Asn123 and Thr173 each coordinate substrate. Residue Lys175 is the Proton acceptor of the active site. Substrate is bound at residue Lys177. Lys201, Asp203, and Glu204 together coordinate Mg(2+). Lys201 carries the post-translational modification N6-carboxylysine. Residue His294 is the Proton acceptor of the active site. The substrate site is built by Arg295, His327, and Ser379.

Belongs to the RuBisCO large chain family. Type I subfamily. In terms of assembly, heterohexadecamer of 8 large chains and 8 small chains; disulfide-linked. The disulfide link is formed within the large subunit homodimers. The cofactor is Mg(2+). The disulfide bond which can form in the large chain dimeric partners within the hexadecamer appears to be associated with oxidative stress and protein turnover.

The protein resides in the plastid. It localises to the chloroplast. The catalysed reaction is 2 (2R)-3-phosphoglycerate + 2 H(+) = D-ribulose 1,5-bisphosphate + CO2 + H2O. It carries out the reaction D-ribulose 1,5-bisphosphate + O2 = 2-phosphoglycolate + (2R)-3-phosphoglycerate + 2 H(+). Its function is as follows. RuBisCO catalyzes two reactions: the carboxylation of D-ribulose 1,5-bisphosphate, the primary event in carbon dioxide fixation, as well as the oxidative fragmentation of the pentose substrate in the photorespiration process. Both reactions occur simultaneously and in competition at the same active site. The polypeptide is Ribulose bisphosphate carboxylase large chain (Physcomitrium patens (Spreading-leaved earth moss)).